A 240-amino-acid polypeptide reads, in one-letter code: UDP-2,3-diacylglucosamine hydrolase (240 aa).

Residues Asp-8, His-10, Asp-41, Asn-79, and His-114 each coordinate Mn(2+). Substrate is bound at residue 79–80 (NR). 5 residues coordinate substrate: Asp-122, Ser-160, Asn-164, Lys-167, and His-195. Positions 195 and 197 each coordinate Mn(2+).

It belongs to the LpxH family. It depends on Mn(2+) as a cofactor.

The protein resides in the cell inner membrane. It catalyses the reaction UDP-2-N,3-O-bis[(3R)-3-hydroxytetradecanoyl]-alpha-D-glucosamine + H2O = 2-N,3-O-bis[(3R)-3-hydroxytetradecanoyl]-alpha-D-glucosaminyl 1-phosphate + UMP + 2 H(+). Its pathway is glycolipid biosynthesis; lipid IV(A) biosynthesis; lipid IV(A) from (3R)-3-hydroxytetradecanoyl-[acyl-carrier-protein] and UDP-N-acetyl-alpha-D-glucosamine: step 4/6. In terms of biological role, hydrolyzes the pyrophosphate bond of UDP-2,3-diacylglucosamine to yield 2,3-diacylglucosamine 1-phosphate (lipid X) and UMP by catalyzing the attack of water at the alpha-P atom. Involved in the biosynthesis of lipid A, a phosphorylated glycolipid that anchors the lipopolysaccharide to the outer membrane of the cell. In Escherichia coli O17:K52:H18 (strain UMN026 / ExPEC), this protein is UDP-2,3-diacylglucosamine hydrolase.